The sequence spans 705 residues: Prolyl endopeptidase (705 aa).

An N-terminal signal peptide occupies residues 1 to 20 (MKYKKLSVAVAAFAFAAVSA). Active-site charge relay system residues include S556 and H675.

Belongs to the peptidase S9A family. Monomer.

It is found in the periplasm. The catalysed reaction is Hydrolysis of Pro-|-Xaa &gt;&gt; Ala-|-Xaa in oligopeptides.. Its function is as follows. Cleaves peptide bonds on the C-terminal side of prolyl residues within peptides that are up to approximately 30 amino acids long. Has an absolute requirement for an X-Pro bond in the trans configuration immediately preceding the Pro-Y scissible bond. The polypeptide is Prolyl endopeptidase (Elizabethkingia miricola (Chryseobacterium miricola)).